The chain runs to 658 residues: Threonine--tRNA ligase (658 aa).

Residues 1 to 61 enclose the TGS domain; sequence MSDVRVIIQR…KDGETVEAVE (61 aa). A catalytic region spans residues 259–554; that stretch reads DHRKLGSELD…LLEHYAGAMP (296 aa). 3 residues coordinate Zn(2+): Cys-353, His-404, and His-531.

This sequence belongs to the class-II aminoacyl-tRNA synthetase family. In terms of assembly, homodimer. Zn(2+) serves as cofactor.

Its subcellular location is the cytoplasm. The catalysed reaction is tRNA(Thr) + L-threonine + ATP = L-threonyl-tRNA(Thr) + AMP + diphosphate + H(+). Functionally, catalyzes the attachment of threonine to tRNA(Thr) in a two-step reaction: L-threonine is first activated by ATP to form Thr-AMP and then transferred to the acceptor end of tRNA(Thr). Also edits incorrectly charged L-seryl-tRNA(Thr). The chain is Threonine--tRNA ligase from Streptomyces coelicolor (strain ATCC BAA-471 / A3(2) / M145).